We begin with the raw amino-acid sequence, 721 residues long: Leucine-rich repeat flightless-interacting protein 2 (721 aa).

The interval 1-370 is DVL3-binding; sequence MGTPASGRKR…YMQGLKELKE (370 aa). A Phosphoserine modification is found at Ser-18. Residues 22 to 49 adopt a coiled-coil conformation; that stretch reads EALSNIAREAEARLAAKRAARAEARDIR. Phosphoserine occurs at positions 96, 101, 168, 173, 190, and 202. 2 disordered regions span residues 232–262 and 295–338; these read SARSSPGFTNDDTASIVSSDRASRGRRESVV and KSDK…IDPD. 2 stretches are compositionally biased toward polar residues: residues 237-251 and 305-338; these read PGFTNDDTASIVSSD and TRPSSRNSASATTPLSGNSSRRGSGDTSSLIDPD. A phosphoserine mark is found at Ser-309, Ser-312, Ser-320, Ser-324, and Ser-328. Thr-331 carries the post-translational modification Phosphothreonine. Ser-332 and Ser-333 each carry phosphoserine. 2 coiled-coil regions span residues 349–524 and 566–714; these read DLKD…GEKH and LDVR…KANR.

Belongs to the LRRFIP family. As to quaternary structure, interacts (via N-terminus) with DVL3. Interacts with FLII. Weakly interacts with MYD88 in resting cells. Following LPS-stimulation, the interaction with MYD88 is rapidly enhanced; the complex gradually dissociates to basal levels after 6 hours of stimulation. Interaction with MYD88 is regulated by LPS-induced phosphorylation at Ser-202. In the presence of LPS, competes with FLII for MYD88-binding. Ser-190 and Ser-202 are phosphorylated in response to LPS stimulation. Ser-202 phosphorylation regulates the LPS-induced interaction with MYD88. In terms of tissue distribution, widely expressed, with highest levels in heart and skeletal muscle.

May function as activator of the canonical Wnt signaling pathway, in association with DVL3, upstream of CTNNB1/beta-catenin. Positively regulates Toll-like receptor (TLR) signaling in response to agonist probably by competing with the negative FLII regulator for MYD88-binding. The polypeptide is Leucine-rich repeat flightless-interacting protein 2 (LRRFIP2) (Homo sapiens (Human)).